A 115-amino-acid chain; its full sequence is Aspartate 1-decarboxylase (115 aa).

The Schiff-base intermediate with substrate; via pyruvic acid role is filled by Ser25. Pyruvic acid (Ser) is present on Ser25. Thr57 is a binding site for substrate. The Proton donor role is filled by Tyr58. Residue 72 to 74 (GAA) participates in substrate binding.

Belongs to the PanD family. In terms of assembly, heterooctamer of four alpha and four beta subunits. Pyruvate is required as a cofactor. Is synthesized initially as an inactive proenzyme, which is activated by self-cleavage at a specific serine bond to produce a beta-subunit with a hydroxyl group at its C-terminus and an alpha-subunit with a pyruvoyl group at its N-terminus.

The protein localises to the cytoplasm. The enzyme catalyses L-aspartate + H(+) = beta-alanine + CO2. It functions in the pathway cofactor biosynthesis; (R)-pantothenate biosynthesis; beta-alanine from L-aspartate: step 1/1. In terms of biological role, catalyzes the pyruvoyl-dependent decarboxylation of aspartate to produce beta-alanine. This Campylobacter fetus subsp. fetus (strain 82-40) protein is Aspartate 1-decarboxylase.